The sequence spans 616 residues: Elongation factor 4 (616 aa).

The 187-residue stretch at 17 to 203 (ERIRNFCIIA…RVCELVPAPV (187 aa)) folds into the tr-type G domain. GTP contacts are provided by residues 29-34 (DHGKST) and 150-153 (NKID).

Belongs to the TRAFAC class translation factor GTPase superfamily. Classic translation factor GTPase family. LepA subfamily.

Its subcellular location is the cell membrane. It catalyses the reaction GTP + H2O = GDP + phosphate + H(+). Its function is as follows. Required for accurate and efficient protein synthesis under certain stress conditions. May act as a fidelity factor of the translation reaction, by catalyzing a one-codon backward translocation of tRNAs on improperly translocated ribosomes. Back-translocation proceeds from a post-translocation (POST) complex to a pre-translocation (PRE) complex, thus giving elongation factor G a second chance to translocate the tRNAs correctly. Binds to ribosomes in a GTP-dependent manner. The sequence is that of Elongation factor 4 from Corynebacterium jeikeium (strain K411).